The chain runs to 203 residues: MPAFDTPAMMLILWAVIGYGLGSIPFGLILTRAMGMGDLRQIGSGNIGTTNVLRTGNKGAAALTLLLDGGKGAVAVLLARAFAGEDAAQVAALAAFVGHCYPIWLGFKGGKGVATFLGLWLALAWPVGVACCLSWLAGAAVTRISSMGALVAAASSTFWLVLLDQGAGFVLGIVLTLMVFWRHRANIARLKARTEPKIGQKSA.

A run of 5 helical transmembrane segments spans residues 10–30, 59–79, 87–107, 116–136, and 160–180; these read MLILWAVIGYGLGSIPFGLIL, GAAALTLLLDGGKGAVAVLLA, AAQVAALAAFVGHCYPIWLGF, FLGLWLALAWPVGVACCLSWL, and LVLLDQGAGFVLGIVLTLMVF.

The protein belongs to the PlsY family. In terms of assembly, probably interacts with PlsX.

Its subcellular location is the cell inner membrane. The enzyme catalyses an acyl phosphate + sn-glycerol 3-phosphate = a 1-acyl-sn-glycero-3-phosphate + phosphate. It functions in the pathway lipid metabolism; phospholipid metabolism. In terms of biological role, catalyzes the transfer of an acyl group from acyl-phosphate (acyl-PO(4)) to glycerol-3-phosphate (G3P) to form lysophosphatidic acid (LPA). This enzyme utilizes acyl-phosphate as fatty acyl donor, but not acyl-CoA or acyl-ACP. The sequence is that of Glycerol-3-phosphate acyltransferase from Ruegeria pomeroyi (strain ATCC 700808 / DSM 15171 / DSS-3) (Silicibacter pomeroyi).